The chain runs to 112 residues: Thioredoxin-like protein YdfQ (112 aa).

Positions 1–107 (MKEMTGLHSL…LEQKLKRVYR (107 aa)) constitute a Thioredoxin domain. Residues C32 and C35 are joined by a disulfide bond.

In Bacillus subtilis (strain 168), this protein is Thioredoxin-like protein YdfQ (ydfQ).